The primary structure comprises 301 residues: Envoplakin-like protein (301 aa).

A coiled-coil region spans residues M1 to Y88. Disordered regions lie at residues R18 to S41 and G118 to I166. Positions S26–S41 are enriched in polar residues. The span at G136–A151 shows a compositional bias: basic and acidic residues.

This sequence belongs to the plakin or cytolinker family.

The sequence is that of Envoplakin-like protein (EVPLL) from Homo sapiens (Human).